The chain runs to 127 residues: Major sperm protein 2 (127 aa).

A2 carries the post-translational modification N-acetylalanine. One can recognise an MSP domain in the interval 9–126 (DIHTQPGSKI…RRKNLPIEYN (118 aa)).

As to expression, sperm.

The protein localises to the cell projection. It localises to the pseudopodium. Its subcellular location is the cytoplasm. It is found in the cytoskeleton. Central component in molecular interactions underlying sperm crawling. Forms an extensive filament system that extends from sperm villipoda, along the leading edge of the pseudopod. In Onchocerca volvulus, this protein is Major sperm protein 2.